The sequence spans 604 residues: Sulfite reductase [NADPH] flavoprotein alpha-component (604 aa).

The Flavodoxin-like domain maps to 66–204; the sequence is VTVLSASQTG…SANAWTDNIA (139 aa). FMN contacts are provided by residues 72-77, 119-122, and 155-164; these read SQTGNA, STQG, and LGDSSYPNFC. Residues 239 to 453 form the FAD-binding FR-type domain; the sequence is AAPFPAALLA…VERNDGFRLP (215 aa). FAD contacts are provided by residues Thr327, Gln361, 391–394, 409–411, and 424–427; these read RLYS, TVG, and GGAS. NADP(+)-binding positions include 524 to 525, 530 to 534, and Asp566; these read SR and KIYVQ. Tyr604 contributes to the FAD binding site.

It belongs to the NADPH-dependent sulphite reductase flavoprotein subunit CysJ family. This sequence in the N-terminal section; belongs to the flavodoxin family. In the C-terminal section; belongs to the flavoprotein pyridine nucleotide cytochrome reductase family. Alpha(8)-beta(8). The alpha component is a flavoprotein, the beta component is a hemoprotein. The cofactor is FAD. It depends on FMN as a cofactor.

It catalyses the reaction hydrogen sulfide + 3 NADP(+) + 3 H2O = sulfite + 3 NADPH + 4 H(+). It participates in sulfur metabolism; hydrogen sulfide biosynthesis; hydrogen sulfide from sulfite (NADPH route): step 1/1. In terms of biological role, component of the sulfite reductase complex that catalyzes the 6-electron reduction of sulfite to sulfide. This is one of several activities required for the biosynthesis of L-cysteine from sulfate. The flavoprotein component catalyzes the electron flow from NADPH -&gt; FAD -&gt; FMN to the hemoprotein component. In Neisseria meningitidis serogroup B (strain ATCC BAA-335 / MC58), this protein is Sulfite reductase [NADPH] flavoprotein alpha-component.